The sequence spans 495 residues: OTU domain-containing protein CG3251 (495 aa).

In terms of domain architecture, OTU spans 29 to 150 (LFRKHMLGDA…MGHFETVLTM (122 aa)). The region spanning 302–364 (NFKVGAKCQV…HPLPPDEFKA (63 aa)) is the Tudor domain. Over residues 375-389 (LHNSQMGRQSVQGDQ) the composition is skewed to polar residues. Residues 375–404 (LHNSQMGRQSVQGDQQGFVPDPMPGTAPSM) form a disordered region. The segment covering 395 to 404 (DPMPGTAPSM) has biased composition (pro residues).

Its function is as follows. Putative OTU-type deubiquitinase. Catalytically inactive towards all diubiquitin molecules and long K48- and K63- linked ubiquitin chains in vitro. Potential modulator of apoptosis. The protein is OTU domain-containing protein CG3251 of Drosophila melanogaster (Fruit fly).